Reading from the N-terminus, the 437-residue chain is 26S proteasome regulatory subunit 4 homolog (437 aa).

Positions 1-47 (MGQGVSSGQDKKKKKGSNQKPKYEPPVQSKFGRKKRKGGPATAEKLP) are disordered. Residue G2 is the site of N-myristoyl glycine attachment. An ATP-binding site is contributed by 223–230 (GAPGTGKT). Glycyl lysine isopeptide (Lys-Gly) (interchain with G-Cter in ubiquitin) cross-links involve residues K234, K255, and K290.

This sequence belongs to the AAA ATPase family.

The protein localises to the cytoplasm. It localises to the nucleus. In terms of biological role, the 26S proteasome is involved in the ATP-dependent degradation of ubiquitinated proteins. The regulatory (or ATPase) complex confers ATP dependency and substrate specificity to the 26S complex. Has ATPase activity. This is 26S proteasome regulatory subunit 4 homolog (RPT2) from Saccharomyces cerevisiae (strain ATCC 204508 / S288c) (Baker's yeast).